Reading from the N-terminus, the 299-residue chain is Transcription factor srbB (299 aa).

Disordered stretches follow at residues 1 to 33 (MAYN…DPLS) and 81 to 204 (ISGF…NAAK). Residues 161–170 (PVTSQATTSP) show a composition bias toward low complexity. A compositionally biased stretch (polar residues) spans 188 to 199 (RSLSTDSQTATG). Residues 203-216 (AKRAAHNIIEKRYR) are basic motif. The bHLH domain maps to 203–264 (AKRAAHNIIE…TNAIAYMQEL (62 aa)). The segment at 217–264 (TNMNAKFVALEKAMSGSGVQKPTKGGSGPASLKKSEILTNAIAYMQEL) is helix-loop-helix motif. A coiled-coil region spans residues 254 to 281 (LTNAIAYMQELQDQNAALQKELALLKQN).

It localises to the nucleus. In terms of biological role, key transcription factors critical for hypoxia adaptation and virulence. Plays a major role in regulation of heme biosynthesis and carbohydrate metabolism early in the response to hypoxia. This is Transcription factor srbB from Aspergillus fumigatus (strain ATCC MYA-4609 / CBS 101355 / FGSC A1100 / Af293) (Neosartorya fumigata).